An 843-amino-acid chain; its full sequence is Tetratricopeptide repeat protein 7B (843 aa).

The TPR 1 repeat unit spans residues 97-131; the sequence is QESNLIMAKLNYVEGDYKEALNIYARVGLDDLPLT. Residues Ser-160 and Ser-202 each carry the phosphoserine modification. TPR repeat units follow at residues 219–252, 363–396, 397–430, 479–514, 516–548, and 549–582; these read ETGL…VETR, SVVY…AFEE, FHLW…KPDD, TYSL…SPTD, QAAF…QGDD, and ANSL…YPEN. Ser-625, Ser-629, Ser-630, Ser-673, Ser-677, Ser-678, and Ser-681 each carry phosphoserine. TPR repeat units follow at residues 696-729, 730-763, 765-797, and 798-831; these read AQIW…FPMS, HNVL…SPTH, KSMQ…NSTA, and HEVW…EASS.

As to quaternary structure, component of a phosphatidylinositol 4-kinase (PI4K) complex, composed of PI4KA, EFR3 (EFR3A or EFR3B), TTC7 (TTC7A or TTC7B) and HYCC (HYCC1 or HYCC2). Interacts with PI4KA, interaction is direct. Interacts with EFR3 (EFR3A or EFR3B), interaction is direct. Interacts with HYCC (HYCC1 or HYCC2), interaction is direct. Association with the PI4K complex is strongly reduced by TMEM150A.

The protein resides in the cytoplasm. It localises to the cytosol. It is found in the cell membrane. Its function is as follows. Component of a complex required to localize phosphatidylinositol 4-kinase (PI4K) to the plasma membrane. The complex acts as a regulator of phosphatidylinositol 4-phosphate (PtdIns(4)P) synthesis. In the complex, plays a central role in bridging PI4KA to EFR3B and HYCC1, via direct interactions. The protein is Tetratricopeptide repeat protein 7B (TTC7B) of Homo sapiens (Human).